Reading from the N-terminus, the 197-residue chain is Translation initiation factor IF-3 (197 aa).

It belongs to the IF-3 family. In terms of assembly, monomer.

It localises to the cytoplasm. In terms of biological role, IF-3 binds to the 30S ribosomal subunit and shifts the equilibrium between 70S ribosomes and their 50S and 30S subunits in favor of the free subunits, thus enhancing the availability of 30S subunits on which protein synthesis initiation begins. The protein is Translation initiation factor IF-3 of Prosthecochloris aestuarii (strain DSM 271 / SK 413).